The following is a 964-amino-acid chain: Phosphoenolpyruvate carboxylase (964 aa).

S11 bears the Phosphoserine mark. Residues H172 and K600 contribute to the active site.

This sequence belongs to the PEPCase type 1 family. Homotetramer. Mg(2+) serves as cofactor.

Its subcellular location is the cytoplasm. The enzyme catalyses oxaloacetate + phosphate = phosphoenolpyruvate + hydrogencarbonate. It functions in the pathway photosynthesis; C4 acid pathway. By light-reversible phosphorylation. In terms of biological role, through the carboxylation of phosphoenolpyruvate (PEP) it forms oxaloacetate, a four-carbon dicarboxylic acid source for the tricarboxylic acid cycle. In Amaranthus hypochondriacus (Prince-of-Wales feather), this protein is Phosphoenolpyruvate carboxylase.